Reading from the N-terminus, the 366-residue chain is Mitogen-activated protein kinase 13 (366 aa).

Residues 25–308 form the Protein kinase domain; it reads YLAPAHVGSG…AAQALAHPFF (284 aa). Residues 31–39 and Lys-54 contribute to the ATP site; that span reads VGSGAYGAV. The Proton acceptor role is filled by Asp-150. A Phosphothreonine; by MAP2K3, MAP2K4, MAP2K6 and MAP2K7 modification is found at Thr-180. The TXY signature appears at 180–182; that stretch reads TGY. The residue at position 182 (Tyr-182) is a Phosphotyrosine. Phosphoserine is present on Ser-350.

The protein belongs to the protein kinase superfamily. CMGC Ser/Thr protein kinase family. MAP kinase subfamily. In terms of assembly, interacts with MAPK8IP2. It depends on Mg(2+) as a cofactor. Post-translationally, dually phosphorylated on Thr-180 and Tyr-182 by MAP2K3/MKK3, MAP2K4/MKK4, MAP2K6/MKK6 and MAP2K7/MKK7, which activates the enzyme. Dephosphorylated by dual specificity phosphatase DUSP1.

The catalysed reaction is L-seryl-[protein] + ATP = O-phospho-L-seryl-[protein] + ADP + H(+). It carries out the reaction L-threonyl-[protein] + ATP = O-phospho-L-threonyl-[protein] + ADP + H(+). With respect to regulation, activated by phosphorylation on threonine and tyrosine by dual specificity kinases, MAP2K3/MKK3, MAP2K6/MKK6, MAP2K4/MKK4 and MAP2K7/MKK7. Activation by ultraviolet radiation, hyperosmotic shock, anisomycin or by TNF-alpha is mediated by MAP2K3/MKK3. Inhibited by dual specificity phosphatase DUSP1. In terms of biological role, serine/threonine kinase which acts as an essential component of the MAP kinase signal transduction pathway. MAPK13 is one of the four p38 MAPKs which play an important role in the cascades of cellular responses evoked by extracellular stimuli such as pro-inflammatory cytokines or physical stress leading to direct activation of transcription factors such as ELK1 and ATF2. Accordingly, p38 MAPKs phosphorylate a broad range of proteins and it has been estimated that they may have approximately 200 to 300 substrates each. MAPK13 is one of the less studied p38 MAPK isoforms. Some of the targets are downstream kinases such as MAPKAPK2, which are activated through phosphorylation and further phosphorylate additional targets. Plays a role in the regulation of protein translation by phosphorylating and inactivating EEF2K. Involved in cytoskeletal remodeling through phosphorylation of MAPT and STMN1. Mediates UV irradiation induced up-regulation of the gene expression of CXCL14. Plays an important role in the regulation of epidermal keratinocyte differentiation, apoptosis and skin tumor development. Phosphorylates the transcriptional activator MYB in response to stress which leads to rapid MYB degradation via a proteasome-dependent pathway. MAPK13 also phosphorylates and down-regulates PRKD1 during regulation of insulin secretion in pancreatic beta cells. The chain is Mitogen-activated protein kinase 13 (Mapk13) from Mus musculus (Mouse).